The chain runs to 102 residues: Large ribosomal subunit protein bL28 (102 aa).

The segment at Met-1–His-20 is disordered.

Belongs to the bacterial ribosomal protein bL28 family.

The polypeptide is Large ribosomal subunit protein bL28 (Bradyrhizobium sp. (strain BTAi1 / ATCC BAA-1182)).